Reading from the N-terminus, the 754-residue chain is Catalase-peroxidase (754 aa).

Residues 1-29 (MGTQPARKLRNRVFPHPHNHRKEKPMAND) form a disordered region. The segment covering 7–23 (RKLRNRVFPHPHNHRKE) has biased composition (basic residues). The active-site Tryptophan radical intermediate is Trp-106. A cross-link (tryptophyl-tyrosyl-methioninium (Trp-Tyr) (with M-275)) is located at residues 122 to 249 (WHAAGTYRIA…LAAVQMGLIY (128 aa)). His-123 serves as the catalytic Proton acceptor. Residues 249–275 (YVNPEGVDGHPDPLCTAQDVRTTFARM) constitute a cross-link (tryptophyl-tyrosyl-methioninium (Tyr-Met) (with W-122)). His-290 is a binding site for heme b.

This sequence belongs to the peroxidase family. Peroxidase/catalase subfamily. As to quaternary structure, homodimer. The cofactor is heme b. Formation of the three residue Trp-Tyr-Met cross-link is important for the catalase, but not the peroxidase activity of the enzyme.

It catalyses the reaction H2O2 + AH2 = A + 2 H2O. The catalysed reaction is 2 H2O2 = O2 + 2 H2O. Functionally, bifunctional enzyme with both catalase and broad-spectrum peroxidase activity. Also displays NADH oxidase, isoniazid hydrazine lyase and isonicotinoyl-NAD synthase activities. The polypeptide is Catalase-peroxidase (Synechocystis sp. (strain ATCC 27184 / PCC 6803 / Kazusa)).